We begin with the raw amino-acid sequence, 357 residues long: Aspartate carbamoyltransferase catalytic subunit (357 aa).

A compositionally biased stretch (polar residues) spans 1 to 15 (MSNSIDSQSLPTVSP). Positions 1–21 (MSNSIDSQSLPTVSPTDYARF) are disordered. 2 residues coordinate carbamoyl phosphate: arginine 97 and threonine 98. Lysine 125 lines the L-aspartate pocket. Carbamoyl phosphate contacts are provided by arginine 147, histidine 177, and glutamine 180. L-aspartate contacts are provided by arginine 211 and arginine 266. Carbamoyl phosphate-binding residues include glycine 307 and proline 308.

Belongs to the aspartate/ornithine carbamoyltransferase superfamily. ATCase family. Heterododecamer (2C3:3R2) of six catalytic PyrB chains organized as two trimers (C3), and six regulatory PyrI chains organized as three dimers (R2).

The enzyme catalyses carbamoyl phosphate + L-aspartate = N-carbamoyl-L-aspartate + phosphate + H(+). Its pathway is pyrimidine metabolism; UMP biosynthesis via de novo pathway; (S)-dihydroorotate from bicarbonate: step 2/3. Its function is as follows. Catalyzes the condensation of carbamoyl phosphate and aspartate to form carbamoyl aspartate and inorganic phosphate, the committed step in the de novo pyrimidine nucleotide biosynthesis pathway. This is Aspartate carbamoyltransferase catalytic subunit from Psychrobacter cryohalolentis (strain ATCC BAA-1226 / DSM 17306 / VKM B-2378 / K5).